The following is a 705-amino-acid chain: Elongation factor G (705 aa).

The tr-type G domain maps to 8 to 290 (ERYRNFGIMA…GVVHLLPSPA (283 aa)). GTP-binding positions include 17–24 (AHIDAGKT), 88–92 (DTPGH), and 142–145 (NKMD). The interval 290-309 (ADRPPVQGIDEDEKEDTRAA) is disordered.

It belongs to the TRAFAC class translation factor GTPase superfamily. Classic translation factor GTPase family. EF-G/EF-2 subfamily.

The protein resides in the cytoplasm. Catalyzes the GTP-dependent ribosomal translocation step during translation elongation. During this step, the ribosome changes from the pre-translocational (PRE) to the post-translocational (POST) state as the newly formed A-site-bound peptidyl-tRNA and P-site-bound deacylated tRNA move to the P and E sites, respectively. Catalyzes the coordinated movement of the two tRNA molecules, the mRNA and conformational changes in the ribosome. In Xanthomonas axonopodis pv. citri (strain 306), this protein is Elongation factor G.